Reading from the N-terminus, the 103-residue chain is Large ribosomal subunit protein bL21 (103 aa).

The protein belongs to the bacterial ribosomal protein bL21 family. In terms of assembly, part of the 50S ribosomal subunit. Contacts protein L20.

This protein binds to 23S rRNA in the presence of protein L20. This chain is Large ribosomal subunit protein bL21, found in Klebsiella pneumoniae (strain 342).